A 658-amino-acid polypeptide reads, in one-letter code: Carnitine O-palmitoyltransferase 2, mitochondrial (658 aa).

The transit peptide at 1-26 (MARLLTSSSALRWGAVSSSQSVGRAY) directs the protein to the mitochondrion. The Mitochondrial matrix portion of the chain corresponds to 27 to 179 (SSGSPDTEYV…GYLEPEIFHL (153 aa)). The note=Mitochondrial inner membrane intramembrane region spans 180 to 209 (NPAKSDTLTFRKLIRFVPSSLSWYGAYMVN). The Mitochondrial matrix portion of the chain corresponds to 210–658 (AYPLDMSQYF…FTVLQDKPIK (449 aa)). His-373 serves as the catalytic Proton acceptor. CoA is bound at residue 453 to 465 (GKELLKTQKLSPD). Residues Tyr-487, Ser-489, and Thr-500 each contribute to the (R)-carnitine site.

Belongs to the carnitine/choline acetyltransferase family.

The protein localises to the mitochondrion inner membrane. The catalysed reaction is (R)-carnitine + hexadecanoyl-CoA = O-hexadecanoyl-(R)-carnitine + CoA. It carries out the reaction octanoyl-CoA + (R)-carnitine = O-octanoyl-(R)-carnitine + CoA. The enzyme catalyses decanoyl-CoA + (R)-carnitine = O-decanoyl-(R)-carnitine + CoA. It catalyses the reaction dodecanoyl-CoA + (R)-carnitine = O-dodecanoyl-R-carnitine + CoA. The catalysed reaction is tetradecanoyl-CoA + (R)-carnitine = O-tetradecanoyl-(R)-carnitine + CoA. It carries out the reaction (R)-carnitine + octadecanoyl-CoA = O-octadecanoyl-(R)-carnitine + CoA. The enzyme catalyses eicosanoyl-CoA + (R)-carnitine = O-eicosanoyl-(R)-carnitine + CoA. It catalyses the reaction (9Z)-tetradecenoyl-CoA + (R)-carnitine = O-(9Z)-tetradecenoyl-(R)-carnitine + CoA. The catalysed reaction is (5Z)-tetradecenoyl-CoA + (R)-carnitine = O-(5Z)-tetradecenoyl-(R)-carnitine + CoA. It carries out the reaction (R)-carnitine + (9Z)-octadecenoyl-CoA = O-(9Z)-octadecenoyl-(R)-carnitine + CoA. The enzyme catalyses 4,8-dimethylnonanoyl-CoA + (R)-carnitine = O-4,8-dimethylnonanoyl-(R)-carnitine + CoA. It participates in lipid metabolism; fatty acid beta-oxidation. In terms of biological role, involved in the intramitochondrial synthesis of acylcarnitines from accumulated acyl-CoA metabolites. Reconverts acylcarnitines back into the respective acyl-CoA esters that can then undergo beta-oxidation, an essential step for the mitochondrial uptake of long-chain fatty acids and their subsequent beta-oxidation in the mitochondrion. Active with medium (C8-C12) and long-chain (C14-C18) acyl-CoA esters. The sequence is that of Carnitine O-palmitoyltransferase 2, mitochondrial (cpt2) from Xenopus tropicalis (Western clawed frog).